Here is a 429-residue protein sequence, read N- to C-terminus: MSAIVDIIGREVLDSRGNPTVECDVLLESGVMGRAAVPSGASTGSREAIELRDGDKGRYLGKGVLKAVEHINTEISEAIMGLDASEQAFLDRTLIDLDGTENKGRLGANAMLAVSMAVAKAAAEEAGLPLYRYFGGSGAMQLPVPMMNIVNGGAHANNSLDIQEFMVMPVSQTSFREALRCGAEIFHALKKILADKGMSTAVGDEGGFAPNFSSNEECLNTIVQAIEKAGYRAGEDVLLALDCAASEFYHEAEGVYQLEGEGLKLSSTQFADYLANLCDKFPIVSIEDGMAEGDWDGWKTLTDKLGKRVQLVGDDLFVTNTKILKEGIEKGIGNSILIKINQIGTLTETFAAIEMAKRAGYTAVISHRSGETEDSTIADIAVGTNAGQIKTGSLSRSDRMAKYNQLLRIEEDLGDIASYPGKGAFYNLR.

Residue Q163 coordinates (2R)-2-phosphoglycerate. E205 acts as the Proton donor in catalysis. D242, E287, and D314 together coordinate Mg(2+). Positions 339, 368, 369, and 390 each coordinate (2R)-2-phosphoglycerate. The active-site Proton acceptor is K339.

The protein belongs to the enolase family. Requires Mg(2+) as cofactor.

Its subcellular location is the cytoplasm. The protein resides in the secreted. It is found in the cell surface. The catalysed reaction is (2R)-2-phosphoglycerate = phosphoenolpyruvate + H2O. It participates in carbohydrate degradation; glycolysis; pyruvate from D-glyceraldehyde 3-phosphate: step 4/5. Catalyzes the reversible conversion of 2-phosphoglycerate (2-PG) into phosphoenolpyruvate (PEP). It is essential for the degradation of carbohydrates via glycolysis. The polypeptide is Enolase (Cupriavidus taiwanensis (strain DSM 17343 / BCRC 17206 / CCUG 44338 / CIP 107171 / LMG 19424 / R1) (Ralstonia taiwanensis (strain LMG 19424))).